Reading from the N-terminus, the 950-residue chain is Xylosyltransferase 1 (950 aa).

The Cytoplasmic portion of the chain corresponds to 1-17 (MVAAPSARRLVRRSHSA). Residues 18-38 (LLAALTVLLLQTLVGWNFSSL) traverse the membrane as a helical; Signal-anchor for type II membrane protein segment. Over 39–950 (HSGAGERRGG…GAVKPDGRLR (912 aa)) the chain is Lumenal. A disordered region spans residues 42 to 246 (AGERRGGAAA…ELRYDQPPKC (205 aa)). Residues 91–104 (PPARARARALAGCP) show a composition bias toward low complexity. The span at 134–150 (KVRTDSNNENSVPKDFE) shows a compositional bias: basic and acidic residues. The span at 152–161 (VDNSNFAPRT) shows a compositional bias: polar residues. Residues 166–193 (HQPELAKKPPSRQKELLKRRLEQEEKGK) show a composition bias toward basic and acidic residues. Residue N215 is glycosylated (N-linked (GlcNAc...) asparagine). 4 cysteine pairs are disulfide-bonded: C246/C274, C290/C531, C550/C563, and C552/C561. Residues V322, D350, and 379–381 (TIW) contribute to the UDP-alpha-D-xylose site. An N-linked (GlcNAc...) asparagine glycan is attached at N410. 483 to 484 (DW) is a binding site for UDP-alpha-D-xylose. UDP-alpha-D-xylose-binding positions include S564 and 587–588 (RK). Intrachain disulfides connect C664-C918 and C911-C924. The N-linked (GlcNAc...) asparagine glycan is linked to N768. Positions 931-950 (SFSPDPKSELGAVKPDGRLR) are disordered.

This sequence belongs to the glycosyltransferase 14 family. XylT subfamily. In terms of assembly, monomer. Requires a divalent metal cation as cofactor. In terms of processing, contains 7 disulfide bonds. Post-translationally, N-glycosylated.

It is found in the golgi apparatus membrane. It catalyses the reaction UDP-alpha-D-xylose + L-seryl-[protein] = 3-O-(beta-D-xylosyl)-L-seryl-[protein] + UDP + H(+). Its pathway is glycan metabolism; chondroitin sulfate biosynthesis. It participates in glycan metabolism; heparan sulfate biosynthesis. Functionally, catalyzes the first step in the biosynthesis of chondroitin sulfate and dermatan sulfate proteoglycans, such as DCN. Transfers D-xylose from UDP-D-xylose to specific serine residues of the core protein. Required for normal maturation of chondrocytes during bone development, normal onset of ossification and normal embryonic and postnatal skeleton development, especially of the long bones. In Canis lupus familiaris (Dog), this protein is Xylosyltransferase 1 (XYLT1).